The sequence spans 211 residues: Probable endopeptidase cgR_2070 (211 aa).

A signal peptide spans 1 to 35; sequence MGKHRRNNSNATRKAVAASAVALGATAAIASPAQA. In terms of domain architecture, NlpC/P60 spans 97–211; it reads ASTGQAIVDA…YMPFHSAVRF (115 aa). Residue Cys127 is the Nucleophile of the active site. His175 acts as the Proton acceptor in catalysis. His187 is a catalytic residue.

Belongs to the peptidase C40 family.

The protein localises to the secreted. This Corynebacterium glutamicum (strain R) protein is Probable endopeptidase cgR_2070.